Consider the following 246-residue polypeptide: UDP-N-acetyl-D-mannosaminuronic acid transferase (246 aa).

This sequence belongs to the glycosyltransferase 26 family.

The catalysed reaction is UDP-N-acetyl-alpha-D-mannosaminouronate + N-acetyl-alpha-D-glucosaminyl-di-trans,octa-cis-undecaprenyl diphosphate = beta-D-ManNAcA-(1-&gt;4)-alpha-D-GlcNAc-di-trans,octa-cis-undecaprenyl diphosphate + UDP + H(+). Its pathway is bacterial outer membrane biogenesis; enterobacterial common antigen biosynthesis. Its function is as follows. Catalyzes the synthesis of Und-PP-GlcNAc-ManNAcA (Lipid II), the second lipid-linked intermediate involved in enterobacterial common antigen (ECA) synthesis. This chain is UDP-N-acetyl-D-mannosaminuronic acid transferase, found in Salmonella agona (strain SL483).